The following is a 322-amino-acid chain: Malate dehydrogenase (322 aa).

Residues 10 to 15 and aspartate 34 contribute to the NAD(+) site; that span reads GSGQIG. Positions 83 and 89 each coordinate substrate. NAD(+)-binding positions include asparagine 96 and 119 to 121; that span reads ITN. Substrate-binding residues include asparagine 121 and arginine 152. Histidine 176 serves as the catalytic Proton acceptor.

The protein belongs to the LDH/MDH superfamily. MDH type 3 family.

It catalyses the reaction (S)-malate + NAD(+) = oxaloacetate + NADH + H(+). In terms of biological role, catalyzes the reversible oxidation of malate to oxaloacetate. This Bradyrhizobium sp. (strain BTAi1 / ATCC BAA-1182) protein is Malate dehydrogenase.